A 118-amino-acid chain; its full sequence is Ribosome-binding factor A (118 aa).

It belongs to the RbfA family. In terms of assembly, monomer. Binds 30S ribosomal subunits, but not 50S ribosomal subunits or 70S ribosomes.

Its subcellular location is the cytoplasm. One of several proteins that assist in the late maturation steps of the functional core of the 30S ribosomal subunit. Associates with free 30S ribosomal subunits (but not with 30S subunits that are part of 70S ribosomes or polysomes). Required for efficient processing of 16S rRNA. May interact with the 5'-terminal helix region of 16S rRNA. The polypeptide is Ribosome-binding factor A (Geobacter metallireducens (strain ATCC 53774 / DSM 7210 / GS-15)).